The following is a 386-amino-acid chain: Phosphoglycerate kinase (386 aa).

Substrate contacts are provided by residues 21 to 23 (DLN), Arg-36, 59 to 62 (HLGR), Arg-112, and Arg-145. ATP contacts are provided by residues Lys-196, Glu-313, and 339 to 342 (GGDT).

The protein belongs to the phosphoglycerate kinase family. As to quaternary structure, monomer.

The protein resides in the cytoplasm. The catalysed reaction is (2R)-3-phosphoglycerate + ATP = (2R)-3-phospho-glyceroyl phosphate + ADP. Its pathway is carbohydrate degradation; glycolysis; pyruvate from D-glyceraldehyde 3-phosphate: step 2/5. This is Phosphoglycerate kinase from Haemophilus influenzae (strain PittEE).